The primary structure comprises 629 residues: Phosphomethylpyrimidine synthase (629 aa).

Residues 1-30 (MTTKLKNASNLSESAQVDQQSVQPFTRSQK) form a disordered region. Substrate is bound by residues asparagine 233, methionine 262, tyrosine 291, histidine 327, 347–349 (SRG), 388–391 (DGLR), and glutamate 427. Residue histidine 431 coordinates Zn(2+). Residue tyrosine 454 participates in substrate binding. Histidine 495 is a Zn(2+) binding site. [4Fe-4S] cluster contacts are provided by cysteine 575, cysteine 578, and cysteine 583.

It belongs to the ThiC family. As to quaternary structure, homodimer. Requires [4Fe-4S] cluster as cofactor.

It carries out the reaction 5-amino-1-(5-phospho-beta-D-ribosyl)imidazole + S-adenosyl-L-methionine = 4-amino-2-methyl-5-(phosphooxymethyl)pyrimidine + CO + 5'-deoxyadenosine + formate + L-methionine + 3 H(+). The protein operates within cofactor biosynthesis; thiamine diphosphate biosynthesis. Functionally, catalyzes the synthesis of the hydroxymethylpyrimidine phosphate (HMP-P) moiety of thiamine from aminoimidazole ribotide (AIR) in a radical S-adenosyl-L-methionine (SAM)-dependent reaction. This chain is Phosphomethylpyrimidine synthase, found in Pseudomonas fluorescens (strain ATCC BAA-477 / NRRL B-23932 / Pf-5).